Consider the following 123-residue polypeptide: Large ribosomal subunit protein uL18 (123 aa).

Belongs to the universal ribosomal protein uL18 family. In terms of assembly, part of the 50S ribosomal subunit; part of the 5S rRNA/L5/L18/L25 subcomplex. Contacts the 5S and 23S rRNAs.

Functionally, this is one of the proteins that bind and probably mediate the attachment of the 5S RNA into the large ribosomal subunit, where it forms part of the central protuberance. The chain is Large ribosomal subunit protein uL18 from Chlamydia caviae (strain ATCC VR-813 / DSM 19441 / 03DC25 / GPIC) (Chlamydophila caviae).